Reading from the N-terminus, the 1021-residue chain is Replication factor C subunit 1 (1021 aa).

2 disordered regions span residues 1–259 (MSSD…EGAP) and 339–392 (PAKA…GSAS). A compositionally biased stretch (basic and acidic residues) spans 90–110 (KVSDELEDDMKPLPAKEVHKE). A compositionally biased stretch (basic residues) spans 123-138 (SKRKTPVKPPPSKKLK). Acidic residues predominate over residues 197 to 207 (LDDDGEEDKMD). Over residues 219-236 (RGRGGASGGRGRGGGGRG) the composition is skewed to gly residues. 2 stretches are compositionally biased toward basic and acidic residues: residues 241 to 255 (GERK…KEVP) and 347 to 357 (HQSDKNSEKQQ). The 91-residue stretch at 257–347 (GAPDCLTGLT…KPAKATVAKH (91 aa)) folds into the BRCT domain. Residues 374 to 392 (NQITTGKNISPKSNKGSAS) are compositionally biased toward polar residues. An ATP-binding site is contributed by 465–472 (SGPPGIGK). The interval 931–1021 (VGESLPEENG…AGGSGGKRKR (91 aa)) is disordered. Positions 945-958 (EGDEEDSSDAENND) are enriched in acidic residues. The segment covering 965–977 (TKPKLDLQSDKKK) has biased composition (basic and acidic residues). A compositionally biased stretch (low complexity) spans 999-1010 (AGRSKASGSAGK). Residues 1011–1021 (AAGGSGGKRKR) are compositionally biased toward gly residues.

This sequence belongs to the activator 1 large subunit family. As to quaternary structure, heterotetramer of subunits RFC2, RFC3, RFC4 and RFC5 that can form a complex with RFC1. In terms of tissue distribution, expressed in roots, leaves, shoot apical meristem (SAM), flag leaves and panicles.

The protein localises to the nucleus. Functionally, may be involved in DNA replication and thus regulate cell proliferation. This chain is Replication factor C subunit 1 (RFC1), found in Oryza sativa subsp. japonica (Rice).